The following is a 428-amino-acid chain: Light-independent protochlorophyllide reductase subunit N (428 aa).

[4Fe-4S] cluster is bound by residues cysteine 30, cysteine 55, and cysteine 116.

It belongs to the BchN/ChlN family. In terms of assembly, protochlorophyllide reductase is composed of three subunits; BchL, BchN and BchB. Forms a heterotetramer of two BchB and two BchN subunits. It depends on [4Fe-4S] cluster as a cofactor.

It catalyses the reaction chlorophyllide a + oxidized 2[4Fe-4S]-[ferredoxin] + 2 ADP + 2 phosphate = protochlorophyllide a + reduced 2[4Fe-4S]-[ferredoxin] + 2 ATP + 2 H2O. It functions in the pathway porphyrin-containing compound metabolism; bacteriochlorophyll biosynthesis (light-independent). In terms of biological role, component of the dark-operative protochlorophyllide reductase (DPOR) that uses Mg-ATP and reduced ferredoxin to reduce ring D of protochlorophyllide (Pchlide) to form chlorophyllide a (Chlide). This reaction is light-independent. The NB-protein (BchN-BchB) is the catalytic component of the complex. The chain is Light-independent protochlorophyllide reductase subunit N from Bradyrhizobium sp. (strain BTAi1 / ATCC BAA-1182).